A 245-amino-acid polypeptide reads, in one-letter code: Cytochrome P450 CYP82H23 (245 aa).

Belongs to the cytochrome P450 family. The cofactor is heme.

Functionally, probable heme-thiolate monooxygenase. This Panax ginseng (Korean ginseng) protein is Cytochrome P450 CYP82H23.